Reading from the N-terminus, the 406-residue chain is Tyrosine--tRNA ligase (406 aa).

Tyr-35 is an L-tyrosine binding site. Positions 40 to 49 (PTADSLHVGH) match the 'HIGH' region motif. Positions 168 and 172 each coordinate L-tyrosine. Positions 228–232 (KMGKT) match the 'KMSKS' region motif. An ATP-binding site is contributed by Lys-231. The 65-residue stretch at 340-404 (AELLDILVEA…RGKKNYNKIV (65 aa)) folds into the S4 RNA-binding domain.

It belongs to the class-I aminoacyl-tRNA synthetase family. TyrS type 1 subfamily. As to quaternary structure, homodimer.

It localises to the cytoplasm. It carries out the reaction tRNA(Tyr) + L-tyrosine + ATP = L-tyrosyl-tRNA(Tyr) + AMP + diphosphate + H(+). In terms of biological role, catalyzes the attachment of tyrosine to tRNA(Tyr) in a two-step reaction: tyrosine is first activated by ATP to form Tyr-AMP and then transferred to the acceptor end of tRNA(Tyr). The chain is Tyrosine--tRNA ligase from Clostridium perfringens (strain 13 / Type A).